Here is a 62-residue protein sequence, read N- to C-terminus: MTQNPKKIKVTLVKSLIGTKQAHRATARGLGLRHVNSSVEVEDTPAVRGMINNIYYLVKSEV.

It belongs to the universal ribosomal protein uL30 family. As to quaternary structure, part of the 50S ribosomal subunit.

The protein is Large ribosomal subunit protein uL30 of Nitrosospira multiformis (strain ATCC 25196 / NCIMB 11849 / C 71).